The sequence spans 440 residues: Methylthioribose-1-phosphate isomerase (440 aa).

Asp285 functions as the Proton donor in the catalytic mechanism.

It belongs to the eIF-2B alpha/beta/delta subunits family. MtnA subfamily.

It is found in the cytoplasm. The protein resides in the nucleus. It catalyses the reaction 5-(methylsulfanyl)-alpha-D-ribose 1-phosphate = 5-(methylsulfanyl)-D-ribulose 1-phosphate. It participates in amino-acid biosynthesis; L-methionine biosynthesis via salvage pathway; L-methionine from S-methyl-5-thio-alpha-D-ribose 1-phosphate: step 1/6. Catalyzes the interconversion of methylthioribose-1-phosphate (MTR-1-P) into methylthioribulose-1-phosphate (MTRu-1-P). The polypeptide is Methylthioribose-1-phosphate isomerase (mri1) (Botryotinia fuckeliana (strain B05.10) (Noble rot fungus)).